We begin with the raw amino-acid sequence, 507 residues long: ATP synthase subunit alpha, chloroplastic (507 aa).

Residue 170–177 (GDRQTGKT) coordinates ATP.

Belongs to the ATPase alpha/beta chains family. As to quaternary structure, F-type ATPases have 2 components, CF(1) - the catalytic core - and CF(0) - the membrane proton channel. CF(1) has five subunits: alpha(3), beta(3), gamma(1), delta(1), epsilon(1). CF(0) has four main subunits: a, b, b' and c.

Its subcellular location is the plastid. The protein localises to the chloroplast thylakoid membrane. The catalysed reaction is ATP + H2O + 4 H(+)(in) = ADP + phosphate + 5 H(+)(out). Produces ATP from ADP in the presence of a proton gradient across the membrane. The alpha chain is a regulatory subunit. In Panax ginseng (Korean ginseng), this protein is ATP synthase subunit alpha, chloroplastic.